The sequence spans 286 residues: Cysteine-rich repeat secretory protein 57 (286 aa).

An N-terminal signal peptide occupies residues Met1–Ala20. Residues Ile21–Arg265 lie on the Extracellular side of the membrane. Gnk2-homologous domains lie at His29–Phe131 and Thr137–Ser247. Residues Asn35, Asn40, Asn44, Asn60, Asn69, Asn90, Asn100, Asn108, Asn209, and Asn246 are each glycosylated (N-linked (GlcNAc...) asparagine). Residues Gly266–Leu284 traverse the membrane as a helical segment. At Gly285–Leu286 the chain is on the cytoplasmic side.

It belongs to the cysteine-rich repeat secretory protein family.

It localises to the membrane. This is Cysteine-rich repeat secretory protein 57 (CRRSP57) from Arabidopsis thaliana (Mouse-ear cress).